Consider the following 218-residue polypeptide: Phosphatidylserine decarboxylase proenzyme (218 aa).

S183 (schiff-base intermediate with substrate; via pyruvic acid) is an active-site residue. At S183 the chain carries Pyruvic acid (Ser); by autocatalysis.

This sequence belongs to the phosphatidylserine decarboxylase family. PSD-A subfamily. Heterodimer of a large membrane-associated beta subunit and a small pyruvoyl-containing alpha subunit. It depends on pyruvate as a cofactor. In terms of processing, is synthesized initially as an inactive proenzyme. Formation of the active enzyme involves a self-maturation process in which the active site pyruvoyl group is generated from an internal serine residue via an autocatalytic post-translational modification. Two non-identical subunits are generated from the proenzyme in this reaction, and the pyruvate is formed at the N-terminus of the alpha chain, which is derived from the carboxyl end of the proenzyme. The post-translation cleavage follows an unusual pathway, termed non-hydrolytic serinolysis, in which the side chain hydroxyl group of the serine supplies its oxygen atom to form the C-terminus of the beta chain, while the remainder of the serine residue undergoes an oxidative deamination to produce ammonia and the pyruvoyl prosthetic group on the alpha chain.

It localises to the cell membrane. It carries out the reaction a 1,2-diacyl-sn-glycero-3-phospho-L-serine + H(+) = a 1,2-diacyl-sn-glycero-3-phosphoethanolamine + CO2. The protein operates within phospholipid metabolism; phosphatidylethanolamine biosynthesis; phosphatidylethanolamine from CDP-diacylglycerol: step 2/2. Its function is as follows. Catalyzes the formation of phosphatidylethanolamine (PtdEtn) from phosphatidylserine (PtdSer). The protein is Phosphatidylserine decarboxylase proenzyme of Magnetococcus marinus (strain ATCC BAA-1437 / JCM 17883 / MC-1).